The sequence spans 78 residues: Translational regulator CsrA (78 aa).

The protein belongs to the CsrA/RsmA family. In terms of assembly, homodimer; the beta-strands of each monomer intercalate to form a hydrophobic core, while the alpha-helices form wings that extend away from the core.

The protein resides in the cytoplasm. Functionally, a translational regulator that binds mRNA to regulate translation initiation and/or mRNA stability. Usually binds in the 5'-UTR at or near the Shine-Dalgarno sequence preventing ribosome-binding, thus repressing translation. Its main target seems to be the major flagellin gene, while its function is anatagonized by FliW. The chain is Translational regulator CsrA from Natranaerobius thermophilus (strain ATCC BAA-1301 / DSM 18059 / JW/NM-WN-LF).